The primary structure comprises 399 residues: Ectoine hydrolase (399 aa).

It belongs to the peptidase M24 family.

It localises to the cytoplasm. It carries out the reaction L-ectoine + H2O = (2S)-2-acetamido-4-aminobutanoate. In terms of biological role, involved in the degradation of ectoine, which allows H.elongata to utilize ectoine as both a carbon and a nitrogen source for growth. Catalyzes the hydrolysis of ectoine to N-acetyl-L-2,4-diaminobutyric acid (N-Ac-DABA). It can produce both isoforms N-gamma-acetyl-L-2,4-diaminobutyric acid (N-gamma-Ac-DABA) and N-alpha-acetyl-L-2,4-diaminobutyric acid (-Nalpha-Ac-DABA), however N-alpha-Ac-DABA is the essential substrate for the subsequent catabolic enzyme DoeB. The sequence is that of Ectoine hydrolase from Halomonas elongata (strain ATCC 33173 / DSM 2581 / NBRC 15536 / NCIMB 2198 / 1H9).